The following is a 33-amino-acid chain: uncharacterized protein (33 aa).

A helical transmembrane segment spans residues 11-31 (LALVIYMSVVLLLMVGVPLLF).

It localises to the membrane. This is an uncharacterized protein from Saccharomyces cerevisiae (strain ATCC 204508 / S288c) (Baker's yeast).